The chain runs to 224 residues: DNA mismatch repair protein MutH (224 aa).

It belongs to the MutH family.

The protein resides in the cytoplasm. Its function is as follows. Sequence-specific endonuclease that cleaves unmethylated GATC sequences. It is involved in DNA mismatch repair. The protein is DNA mismatch repair protein MutH of Histophilus somni (strain 129Pt) (Haemophilus somnus).